Reading from the N-terminus, the 356-residue chain is 3-dehydroquinate synthase (356 aa).

NAD(+) is bound by residues 106 to 110 (GVVGD), 130 to 131 (TT), K143, and K152. 3 residues coordinate Zn(2+): E185, H248, and H265.

This sequence belongs to the sugar phosphate cyclases superfamily. Dehydroquinate synthase family. It depends on Co(2+) as a cofactor. The cofactor is Zn(2+). Requires NAD(+) as cofactor.

The protein localises to the cytoplasm. The enzyme catalyses 7-phospho-2-dehydro-3-deoxy-D-arabino-heptonate = 3-dehydroquinate + phosphate. The protein operates within metabolic intermediate biosynthesis; chorismate biosynthesis; chorismate from D-erythrose 4-phosphate and phosphoenolpyruvate: step 2/7. Catalyzes the conversion of 3-deoxy-D-arabino-heptulosonate 7-phosphate (DAHP) to dehydroquinate (DHQ). In Thermoanaerobacter sp. (strain X514), this protein is 3-dehydroquinate synthase.